Consider the following 382-residue polypeptide: G2/mitotic-specific cyclin-B2 (382 aa).

The segment covering 1 to 12 (MSSVEAVTQQQL) has biased composition (polar residues). The interval 1–78 (MSSVEAVTQQ…HTSAGDPAPI (78 aa)) is disordered. Low complexity predominate over residues 38 to 47 (NRNAAAAANR).

It belongs to the cyclin family. Cyclin AB subfamily. In terms of assembly, interacts with the CDK1 protein kinase to form a serine/threonine kinase holoenzyme complex also known as maturation promoting factor (MPF). The cyclin subunit imparts substrate specificity to the complex.

In terms of biological role, essential for the control of the cell cycle at the G2/M (mitosis) transition. This Oryzias javanicus (Javanese ricefish) protein is G2/mitotic-specific cyclin-B2 (ccnb2).